The primary structure comprises 421 residues: UDP-N-acetylglucosamine 1-carboxyvinyltransferase (421 aa).

Position 22–23 (22–23 (KN)) interacts with phosphoenolpyruvate. A UDP-N-acetyl-alpha-D-glucosamine-binding site is contributed by R93. C117 acts as the Proton donor in catalysis. C117 bears the 2-(S-cysteinyl)pyruvic acid O-phosphothioketal mark. UDP-N-acetyl-alpha-D-glucosamine contacts are provided by residues 122-126 (RPVDL), D308, and V330.

Belongs to the EPSP synthase family. MurA subfamily.

It is found in the cytoplasm. It catalyses the reaction phosphoenolpyruvate + UDP-N-acetyl-alpha-D-glucosamine = UDP-N-acetyl-3-O-(1-carboxyvinyl)-alpha-D-glucosamine + phosphate. It functions in the pathway cell wall biogenesis; peptidoglycan biosynthesis. Its function is as follows. Cell wall formation. Adds enolpyruvyl to UDP-N-acetylglucosamine. The chain is UDP-N-acetylglucosamine 1-carboxyvinyltransferase from Pseudomonas aeruginosa (strain LESB58).